The sequence spans 1497 residues: DNA-directed RNA polymerase subunit beta' (1497 aa).

Residues Cys-67, Cys-69, Cys-82, and Cys-85 each contribute to the Zn(2+) site. Mg(2+) contacts are provided by Asp-499, Asp-501, and Asp-503. The Zn(2+) site is built by Cys-867, Cys-943, Cys-950, and Cys-953. Residues 1476–1497 are disordered; the sequence is ESNATERVVEEPATREGFANER. Positions 1482-1497 are enriched in basic and acidic residues; sequence RVVEEPATREGFANER.

The protein belongs to the RNA polymerase beta' chain family. The RNAP catalytic core consists of 2 alpha, 1 beta, 1 beta' and 1 omega subunit. When a sigma factor is associated with the core the holoenzyme is formed, which can initiate transcription. Mg(2+) is required as a cofactor. Requires Zn(2+) as cofactor.

It catalyses the reaction RNA(n) + a ribonucleoside 5'-triphosphate = RNA(n+1) + diphosphate. Functionally, DNA-dependent RNA polymerase catalyzes the transcription of DNA into RNA using the four ribonucleoside triphosphates as substrates. The protein is DNA-directed RNA polymerase subunit beta' of Pelodictyon phaeoclathratiforme (strain DSM 5477 / BU-1).